The sequence spans 441 residues: Glutamyl-tRNA reductase (441 aa).

Residues 49 to 52, S109, 114 to 116, and Q120 each bind substrate; these read TCNR and EGQ. The Nucleophile role is filled by C50. NADP(+) is bound at residue 198-203; that stretch reads GAGRMS.

Belongs to the glutamyl-tRNA reductase family. As to quaternary structure, homodimer.

It carries out the reaction (S)-4-amino-5-oxopentanoate + tRNA(Glu) + NADP(+) = L-glutamyl-tRNA(Glu) + NADPH + H(+). It functions in the pathway porphyrin-containing compound metabolism; protoporphyrin-IX biosynthesis; 5-aminolevulinate from L-glutamyl-tRNA(Glu): step 1/2. Its pathway is porphyrin-containing compound metabolism; chlorophyll biosynthesis. In terms of biological role, catalyzes the NADPH-dependent reduction of glutamyl-tRNA(Glu) to glutamate 1-semialdehyde (GSA). This is Glutamyl-tRNA reductase from Prochlorococcus marinus (strain NATL1A).